An 870-amino-acid polypeptide reads, in one-letter code: Outer membrane usher protein FimD (870 aa).

The first 27 residues, 1 to 27, serve as a signal peptide directing secretion; sequence MKKTTWFAGRFPGYVSPLSSVALSVLA. A disulfide bridge links C843 with C865.

It belongs to the fimbrial export usher family.

Its subcellular location is the cell outer membrane. Its function is as follows. Involved in the export and assembly of FimA fimbrial subunits across the outer membrane. The sequence is that of Outer membrane usher protein FimD (fimD) from Salmonella typhimurium (strain LT2 / SGSC1412 / ATCC 700720).